A 158-amino-acid polypeptide reads, in one-letter code: Crossover junction endodeoxyribonuclease RuvC (158 aa).

Residues Asp7, Glu66, and Asp139 contribute to the active site. Asp7, Glu66, and Asp139 together coordinate Mg(2+).

This sequence belongs to the RuvC family. As to quaternary structure, homodimer which binds Holliday junction (HJ) DNA. The HJ becomes 2-fold symmetrical on binding to RuvC with unstacked arms; it has a different conformation from HJ DNA in complex with RuvA. In the full resolvosome a probable DNA-RuvA(4)-RuvB(12)-RuvC(2) complex forms which resolves the HJ. The cofactor is Mg(2+).

The protein localises to the cytoplasm. It catalyses the reaction Endonucleolytic cleavage at a junction such as a reciprocal single-stranded crossover between two homologous DNA duplexes (Holliday junction).. In terms of biological role, the RuvA-RuvB-RuvC complex processes Holliday junction (HJ) DNA during genetic recombination and DNA repair. Endonuclease that resolves HJ intermediates. Cleaves cruciform DNA by making single-stranded nicks across the HJ at symmetrical positions within the homologous arms, yielding a 5'-phosphate and a 3'-hydroxyl group; requires a central core of homology in the junction. The consensus cleavage sequence is 5'-(A/T)TT(C/G)-3'. Cleavage occurs on the 3'-side of the TT dinucleotide at the point of strand exchange. HJ branch migration catalyzed by RuvA-RuvB allows RuvC to scan DNA until it finds its consensus sequence, where it cleaves and resolves the cruciform DNA. The chain is Crossover junction endodeoxyribonuclease RuvC from Carboxydothermus hydrogenoformans (strain ATCC BAA-161 / DSM 6008 / Z-2901).